We begin with the raw amino-acid sequence, 2812 residues long: MVPPVWTLLLLVGAALFRKEKPPDQKLVVRSSRDNYVLTQCDFEDDAKPLCDWSQVSADDEDWVRASGPSPTGSTGAPGGYPNGEGSYLHMESNSFHRGGVARLLSPDLWEQGPLCVHFAHHMFGLSWGAQLRLLLLSGEEGRRPDVLWKHWNTQRPSWMLTTVTVPAGFTLPTRLMFEGTRGSTAYLDIALDALSIRRGSCNRVCMMQTCSFDIPNDLCDWTWIPTASGAKWTQKKGSSGKPGVGPDGDFSSPGSGCYMLLDPKNARPGQKAVLLSPVSLSSGCLSFSFHYILRGQSPGAALHIYASVLGSIRKHTLFSGQPGPNWQAVSVNYTAVGRIQFAVVGVFGKTPEPAVAVDATSIAPCGEGFPQCDFEDNAHPFCDWVQTSGDGGHWALGHKNGPVHGMGPAGGFPNAGGHYIYLEADEFSQAGQSVRLVSRPFCAPGDICVEFAYHMYGLGEGTMLELLLGSPAGSPPIPLWKRVGSQRPYWQNTSVTVPSGHQQPMQLIFKGIQGSNTASVVAMGFILINPGTCPVKVLPELPPVSPVSSTGPSETTGLTENPTISTKKPTVSIEKPSVTTEKPTVPKEKPTIPTEKPTISTEKPTIPSEKPNMPSEKPTIPSEKPTILTEKPTIPSEKPTIPSEKPTISTEKPTVPTEEPTTPTEETTTSMEEPVIPTEKPSIPTEKPSIPTEKPTISMEETIISTEKPTISPEKPTIPTEKPTIPTEKSTISPEKPTTPTEKPTIPTEKPTISPEKPTTPTEKPTISPEKLTIPTEKPTIPTEKPTIPTEKPTISTEEPTTPTEETTISTEKPSIPMEKPTLPTEETTTSVEETTISTEKLTIPMEKPTISTEKPTIPTEKPTISPEKLTIPTEKLTIPTEKPTIPIEETTISTEKLTIPTEKPTISPEKPTISTEKPTIPTEKPTIPTEETTISTEKLTIPTEKPTISPEKLTIPTEKPTISTEKPTIPTEKLTIPTEKPTIPTEKPTIPTEKLTALRPPHPSPTATGLAALVMSPHAPSTPMTSVILGTTTTSRSSTERCPPNARYESCACPASCKSPRPSCGPLCREGCVCNPGFLFSDNHCIQASSCNCFYNNDYYEPGAEWFSPNCTEHCRCWPGSRVECQISQCGTHTVCQLKNGQYGCHPYAGTATCLVYGDPHYVTFDGRHFGFMGKCTYILAQPCGNSTDPFFRVTAKNEEQGQEGVSCLSKVYVTLPESTVTLLKGRRTLVGGQQVTLPAIPSKGVFLGASGRFVELQTEFGLRVRWDGDQQLYVTVSSTYSGKLCGLCGNYDGNSDNDHLKLDGSPAGDKEELGNSWQTDQDEDQECQKYQVVNSPSCDSSLQSSMSGPGFCGRLVDTHGPFETCLLHVKAASFFDSCMLDMCGFQGLQHLLCTHMSTMTTTCQDAGHAVKPWREPHFCPMACPPNSKYSLCAKPCPDTCHSGFSGMFCSDRCVEACECNPGFVLSGLECIPRSQCGCLHPAGSYFKVGERWYKPGCKELCVCESNNRIRCQPWRCRAQEFCGQQDGIYGCHAQGAATCTASGDPHYLTFDGALHHFMGTCTYVLTRPCWSRSQDSYFVVSATNENRGGILEVSYIKAVHVTVFDLSISLLRGCKVMLNGHRVALPVWLAQGRVTIRLSSNLVLLYTNFGLQVRYDGSHLVEVTVPSSYGGQLCGLCGNYNNNSLDDNLRPDRKLAGDSMQLGAAWKLPESSEPGCFLVGGKPSSCQENSMADAWNKNCAILINPQGPFSQCHQVVPPQSSFASCVHGQCGTKGDTTALCRSLQAYASLCAQAGQAPAWRNRTFCPMRCPPGSSYSPCSSPCPDTCSSINNPRDCPKALPCAESCECQKGHILSGTSCVPLGQCGCTDPAGSYHPVGERWYTENTCTRLCTCSVHNNITCFQSTCKPNQICWALDGLLHCRASGVGVCQLPGESHYVSFDGSNHSIPDACTLVLVKVCHPAMALPFFKISAKHEKEEGGTEAFRLHEVYIDIYDAQVTLQKGHRVLINSKQVTLPAISQIPGVSVKSSSIYSIVNIKIGVQVKFDGNHLLEIEIPTTYYGKVCGMCGNFNDEEEDELMMPSDEVANSDSEFVNSWKDKDIDPSCQSLLVDEQQIPAEQQENPSGNCRAADLRRAREKCEAALRAPVWAQCASRIDLTPFLVDCANTLCEFGGLYQALCQALQAFGATCQSQGLKPPLWRNSSFCPLECPAYSSYTNCLPSCSPSCWDLDGRCEGAKVPSACAEGCICQPGYVLSEDKCVPRSQCGCKDAHGGSIPLGKSWVSSGCTEKCVCTGGAIQCGDFRCPSGSHCQLTSDNSNSNCVSDKSEQCSVYGDPRYLTFDGFSYRLQGRMTYVLIKTVDVLPEGVEPLLVEGRNKMDPPRSSIFLQEVITTVYGYKVQLQAGLELVVNNQKMAVPYRPNEHLRVTLWGQRLYLVTDFELVVSFGGRKNAVISLPSMYEGLVSGLCGNYDKNRKNDMMLPSGALTQNLNTFGNSWEVKTEDALLRFPRAIPAEEEGQGAELGLRTGLQVSECSPEQLASNSTQACRVLADPQGPFAACHQTVAPEPFQEHCVLDLCSAQDPREQEELRCQVLSGHGVSSRYHISELYDTLPSILCQPGRPRGLRGPLRGRLRQHPRLCLQWHPEPPLADCGCTSNGIYYQLGSSFLTEDCSQRCTCASSRILLCEPFSCRAGEVCTLGNHTQGCFPESPCLQNPCQNDGQCREQGATFTCECEVGYGGGLCMEPRDAPPPRKPASNLVGVLLGLLVPVVVVLLAVTRECIYRTRRKREKTQEGDRLARLVDTDTVLDCAC.

The signal sequence occupies residues 1-17 (MVPPVWTLLLLVGAALF). The Extracellular portion of the chain corresponds to 18-2757 (RKEKPPDQKL…DAPPPRKPAS (2740 aa)). MAM domains are found at residues 39 to 204 (TQCD…SCNR), 209 to 368 (QTCS…PCGE), and 371 to 536 (PQCD…TCPV). The tract at residues 61 to 84 (EDWVRASGPSPTGSTGAPGGYPNG) is disordered. Residues 66 to 75 (ASGPSPTGST) show a composition bias toward low complexity. Asn-333 and Asn-493 each carry an N-linked (GlcNAc...) asparagine glycan. Disordered stretches follow at residues 545–884 (VSPV…PTEK) and 904–929 (EKPT…KPTI). The span at 547-558 (PVSSTGPSETTG) shows a compositional bias: low complexity. Polar residues predominate over residues 559–570 (LTENPTISTKKP). The tract at residues 573-1041 (SIEKPSVTTE…GTTTTSRSST (469 aa)) is 66 X heptapeptide repeats (approximate) (mucin-like domain). Composition is skewed to low complexity over residues 592-603 (TIPTEKPTISTE), 651-675 (TEKP…MEEP), 713-842 (SPEK…STEK), 853-868 (STEK…TISP), and 916-929 (STEK…KPTI). The TIL 1 domain maps to 1044 to 1093 (CPPNARYESCACPASCKSPRPSCGPLCREGCVCNPGFLFSDNHCIQASSC). Residues 1103–1148 (EPGAEWFSPNCTEHCRCWPGSRVECQISQCGTHTVCQLKNGQYGCH) form the VWFC 1 domain. Asn-1112 and Asn-1188 each carry an N-linked (GlcNAc...) asparagine glycan. One can recognise a VWFD 1 domain in the interval 1154-1331 (ATCLVYGDPH…TDQDEDQECQ (178 aa)). Intrachain disulfides connect Cys-1156–Cys-1291 and Cys-1178–Cys-1330. Residues 1302-1316 (HLKLDGSPAGDKEEL) show a composition bias toward basic and acidic residues. The tract at residues 1302–1323 (HLKLDGSPAGDKEELGNSWQTD) is disordered. The TIL 2 domain occupies 1426–1479 (CPPNSKYSLCAKPCPDTCHSGFSGMFCSDRCVEACECNPGFVLSGLECIPRSQC). The VWFC 2 domain maps to 1480–1535 (GCLHPAGSYFKVGERWYKPGCKELCVCESNNRIRCQPWRCRAQEFCGQQDGIYGCH). Residues 1540 to 1720 (ATCTASGDPH…LPESSEPGCF (181 aa)) enclose the VWFD 2 domain. 2 disulfides stabilise this stretch: Cys-1542–Cys-1680 and Cys-1564–Cys-1719. Asn-1685 and Asn-1804 each carry an N-linked (GlcNAc...) asparagine glycan. Residues 1812 to 1867 (CPPGSSYSPCSSPCPDTCSSINNPRDCPKALPCAESCECQKGHILSGTSCVPLGQC) enclose the TIL 3 domain. The VWFC 3 domain occupies 1868–1924 (GCTDPAGSYHPVGERWYTENTCTRLCTCSVHNNITCFQSTCKPNQICWALDGLLHCR). N-linked (GlcNAc...) asparagine glycosylation is found at Asn-1900 and Asn-1946. One can recognise a VWFD 3 domain in the interval 1929–2108 (GVCQLPGESH…KDKDIDPSCQ (180 aa)). 2 disulfide bridges follow: Cys-1931/Cys-2069 and Cys-1953/Cys-2107. Asn-2203 is a glycosylation site (N-linked (GlcNAc...) asparagine). One can recognise a TIL 4 domain in the interval 2211–2267 (CPAYSSYTNCLPSCSPSCWDLDGRCEGAKVPSACAEGCICQPGYVLSEDKCVPRSQC). The region spanning 2268 to 2329 (GCKDAHGGSI…NSNCVSDKSE (62 aa)) is the VWFC 4 domain. The 177-residue stretch at 2329–2505 (EQCSVYGDPR…SWEVKTEDAL (177 aa)) folds into the VWFD 4 domain. Residues Cys-2331 and Cys-2468 are joined by a disulfide bond. Asn-2542 and Asn-2701 each carry an N-linked (GlcNAc...) asparagine glycan. The 146-residue stretch at 2652-2797 (CGCTSNGIYY…KREKTQEGDR (146 aa)) folds into the VWFC 5 domain. An EGF-like domain is found at 2708-2744 (PESPCLQNPCQNDGQCREQGATFTCECEVGYGGGLCM). Disulfide bonds link Cys-2712–Cys-2723, Cys-2717–Cys-2732, and Cys-2734–Cys-2743. Residues 2758–2778 (NLVGVLLGLLVPVVVVLLAVT) traverse the membrane as a helical segment. The Cytoplasmic portion of the chain corresponds to 2779–2812 (RECIYRTRRKREKTQEGDRLARLVDTDTVLDCAC).

As to quaternary structure, probably forms covalent oligomers. In testis, primarily in haploid spermatids.

The protein resides in the cell membrane. Its function is as follows. Binds in a species-specific manner to the zona pellucida of the egg. May be involved in gamete recognition and/or signaling. This chain is Zonadhesin (ZAN), found in Homo sapiens (Human).